The chain runs to 148 residues: F420H(2)-dependent quinone reductase MT1609 (148 aa).

Residues alanine 46–threonine 48, arginine 52–methionine 57, valine 68–leucine 71, valine 79–asparagine 83, and tyrosine 125 contribute to the coenzyme F420-(gamma-Glu)n site.

It belongs to the F420H(2)-dependent quinone reductase family.

The protein resides in the cell membrane. It carries out the reaction oxidized coenzyme F420-(gamma-L-Glu)(n) + a quinol + H(+) = reduced coenzyme F420-(gamma-L-Glu)(n) + a quinone. In terms of biological role, involved in a F420-dependent anti-oxidant mechanism that protects M.tuberculosis against oxidative stress and bactericidal agents. Catalyzes the F420H(2)-dependent two-electron reduction of quinones to dihydroquinones, thereby preventing the formation of cytotoxic semiquinones obtained by the one-electron reduction pathway. In vitro, catalyzes the reduction of menadione to menadiol; since menaquinone is the sole quinone electron carrier in the respiratory chain in M.tuberculosis, the physiological electron acceptor for Fqr-mediated F420H(2) oxidation is therefore likely to be the endogenous menaquinone found in the membrane fraction of M.tuberculosis. The protein is F420H(2)-dependent quinone reductase MT1609 of Mycobacterium tuberculosis (strain CDC 1551 / Oshkosh).